We begin with the raw amino-acid sequence, 167 residues long: MEDTYIDSLDPEKLLQCPYDKNHQIRACRFPYHLIKCRKNHPDVANKLATCPFNARHQVPRAEISHHISSCDDKSCIEQDVVNQTRNLGQETLAESTWQCPPCDEDWDKDLWEQTSTPFVWGTASFCGNNSPANNIVMEHKSNLASGMRVPKSLPYVLPWKNNGNAQ.

Phosphoserine is present on Ser8. 2 consecutive CHHC U11-48K-type zinc fingers follow at residues 14–41 and 48–75; these read LLQC…RKNH and LATC…DDKS. Residues Cys17, His23, His33, Cys37, Cys51, His57, His67, and Cys71 each coordinate Zn(2+).

Belongs to the UPF0224 (FAM112) family. In terms of tissue distribution, expressed abundantly in adult testis, at moderate levels in unfertilized eggs and ovaries and weakly in embryonic stem cells.

It is found in the cytoplasm. Required for spermatogenesis and is involved in the suppression of retrotransposon transcription in male germ cells. The sequence is that of Gametocyte-specific factor 1 from Mus musculus (Mouse).